A 265-amino-acid chain; its full sequence is Phosphatidylserine decarboxylase proenzyme (265 aa).

Residues aspartate 86, histidine 142, and serine 226 each act as charge relay system; for autoendoproteolytic cleavage activity in the active site. Serine 226 (schiff-base intermediate with substrate; via pyruvic acid; for decarboxylase activity) is an active-site residue. Residue serine 226 is modified to Pyruvic acid (Ser); by autocatalysis.

This sequence belongs to the phosphatidylserine decarboxylase family. PSD-B subfamily. Prokaryotic type I sub-subfamily. In terms of assembly, heterodimer of a large membrane-associated beta subunit and a small pyruvoyl-containing alpha subunit. The cofactor is pyruvate. Post-translationally, is synthesized initially as an inactive proenzyme. Formation of the active enzyme involves a self-maturation process in which the active site pyruvoyl group is generated from an internal serine residue via an autocatalytic post-translational modification. Two non-identical subunits are generated from the proenzyme in this reaction, and the pyruvate is formed at the N-terminus of the alpha chain, which is derived from the carboxyl end of the proenzyme. The autoendoproteolytic cleavage occurs by a canonical serine protease mechanism, in which the side chain hydroxyl group of the serine supplies its oxygen atom to form the C-terminus of the beta chain, while the remainder of the serine residue undergoes an oxidative deamination to produce ammonia and the pyruvoyl prosthetic group on the alpha chain. During this reaction, the Ser that is part of the protease active site of the proenzyme becomes the pyruvoyl prosthetic group, which constitutes an essential element of the active site of the mature decarboxylase.

The protein resides in the cell membrane. It carries out the reaction a 1,2-diacyl-sn-glycero-3-phospho-L-serine + H(+) = a 1,2-diacyl-sn-glycero-3-phosphoethanolamine + CO2. It participates in phospholipid metabolism; phosphatidylethanolamine biosynthesis; phosphatidylethanolamine from CDP-diacylglycerol: step 2/2. Its function is as follows. Catalyzes the formation of phosphatidylethanolamine (PtdEtn) from phosphatidylserine (PtdSer). The sequence is that of Phosphatidylserine decarboxylase proenzyme from Anoxybacillus flavithermus (strain DSM 21510 / WK1).